Consider the following 301-residue polypeptide: D-alanine--D-alanine ligase A (301 aa).

The 195-residue stretch at 96–290 folds into the ATP-grasp domain; that stretch reads KKILRYEGVE…YSKLLDMIIE (195 aa). Residue 123–178 coordinates ATP; it reads LDKLGFPLVVKPNSGGSSVGVKIVYNKNELISMLETVFEWDSEVVIEKYIKGDEIT. Positions 245, 257, and 259 each coordinate Mg(2+).

It belongs to the D-alanine--D-alanine ligase family. Mg(2+) serves as cofactor. Mn(2+) is required as a cofactor.

It is found in the cytoplasm. It carries out the reaction 2 D-alanine + ATP = D-alanyl-D-alanine + ADP + phosphate + H(+). The protein operates within cell wall biogenesis; peptidoglycan biosynthesis. Cell wall formation. The protein is D-alanine--D-alanine ligase A of Bacillus cereus (strain ATCC 14579 / DSM 31 / CCUG 7414 / JCM 2152 / NBRC 15305 / NCIMB 9373 / NCTC 2599 / NRRL B-3711).